The primary structure comprises 485 residues: Aspartyl/glutamyl-tRNA(Asn/Gln) amidotransferase subunit B (485 aa).

This sequence belongs to the GatB/GatE family. GatB subfamily. As to quaternary structure, heterotrimer of A, B and C subunits.

The catalysed reaction is L-glutamyl-tRNA(Gln) + L-glutamine + ATP + H2O = L-glutaminyl-tRNA(Gln) + L-glutamate + ADP + phosphate + H(+). It carries out the reaction L-aspartyl-tRNA(Asn) + L-glutamine + ATP + H2O = L-asparaginyl-tRNA(Asn) + L-glutamate + ADP + phosphate + 2 H(+). In terms of biological role, allows the formation of correctly charged Asn-tRNA(Asn) or Gln-tRNA(Gln) through the transamidation of misacylated Asp-tRNA(Asn) or Glu-tRNA(Gln) in organisms which lack either or both of asparaginyl-tRNA or glutaminyl-tRNA synthetases. The reaction takes place in the presence of glutamine and ATP through an activated phospho-Asp-tRNA(Asn) or phospho-Glu-tRNA(Gln). The protein is Aspartyl/glutamyl-tRNA(Asn/Gln) amidotransferase subunit B of Borreliella afzelii (strain PKo) (Borrelia afzelii).